The primary structure comprises 287 residues: Probable endonuclease 4 (287 aa).

Positions 69, 109, 144, 178, 181, 215, 228, 230, and 260 each coordinate Zn(2+).

This sequence belongs to the AP endonuclease 2 family. The cofactor is Zn(2+).

It carries out the reaction Endonucleolytic cleavage to 5'-phosphooligonucleotide end-products.. Functionally, endonuclease IV plays a role in DNA repair. It cleaves phosphodiester bonds at apurinic or apyrimidinic (AP) sites, generating a 3'-hydroxyl group and a 5'-terminal sugar phosphate. The chain is Probable endonuclease 4 from Thermotoga neapolitana (strain ATCC 49049 / DSM 4359 / NBRC 107923 / NS-E).